The following is a 366-amino-acid chain: Holliday junction branch migration complex subunit RuvB (366 aa).

Residues 1–49 (MAIISSKKQPPEPNGQPNKRPESAPSVPKEKVLQPEAAIDEQGKQEESI) form a disordered region. The large ATPase domain (RuvB-L) stretch occupies residues 13–210 (PNGQPNKRPE…FGLIQKLRFY (198 aa)). Residues Ile-49, Arg-50, Gly-91, Lys-94, Thr-95, Thr-96, 157–159 (EDY), Arg-200, Tyr-210, and Arg-247 contribute to the ATP site. Thr-95 contacts Mg(2+). Residues 211 to 281 (EVDELSQIVL…IAAEALQLFQ (71 aa)) form a small ATPAse domain (RuvB-S) region. Positions 284–366 (PCGLDWTDRR…TPPNEQLSLL (83 aa)) are head domain (RuvB-H). The DNA site is built by Arg-339 and Arg-344.

The protein belongs to the RuvB family. As to quaternary structure, homohexamer. Forms an RuvA(8)-RuvB(12)-Holliday junction (HJ) complex. HJ DNA is sandwiched between 2 RuvA tetramers; dsDNA enters through RuvA and exits via RuvB. An RuvB hexamer assembles on each DNA strand where it exits the tetramer. Each RuvB hexamer is contacted by two RuvA subunits (via domain III) on 2 adjacent RuvB subunits; this complex drives branch migration. In the full resolvosome a probable DNA-RuvA(4)-RuvB(12)-RuvC(2) complex forms which resolves the HJ.

The protein resides in the cytoplasm. The catalysed reaction is ATP + H2O = ADP + phosphate + H(+). In terms of biological role, the RuvA-RuvB-RuvC complex processes Holliday junction (HJ) DNA during genetic recombination and DNA repair, while the RuvA-RuvB complex plays an important role in the rescue of blocked DNA replication forks via replication fork reversal (RFR). RuvA specifically binds to HJ cruciform DNA, conferring on it an open structure. The RuvB hexamer acts as an ATP-dependent pump, pulling dsDNA into and through the RuvAB complex. RuvB forms 2 homohexamers on either side of HJ DNA bound by 1 or 2 RuvA tetramers; 4 subunits per hexamer contact DNA at a time. Coordinated motions by a converter formed by DNA-disengaged RuvB subunits stimulates ATP hydrolysis and nucleotide exchange. Immobilization of the converter enables RuvB to convert the ATP-contained energy into a lever motion, pulling 2 nucleotides of DNA out of the RuvA tetramer per ATP hydrolyzed, thus driving DNA branch migration. The RuvB motors rotate together with the DNA substrate, which together with the progressing nucleotide cycle form the mechanistic basis for DNA recombination by continuous HJ branch migration. Branch migration allows RuvC to scan DNA until it finds its consensus sequence, where it cleaves and resolves cruciform DNA. This chain is Holliday junction branch migration complex subunit RuvB, found in Nostoc sp. (strain PCC 7120 / SAG 25.82 / UTEX 2576).